The primary structure comprises 484 residues: BPI fold-containing family B member 1 (484 aa).

A signal peptide spans 1 to 21 (MAGPWTFTLLCGLLAATLIQA). The N-linked (GlcNAc...) asparagine glycan is linked to Asn48. Cys158 and Cys201 form a disulfide bridge. Residues Asn264 and Asn401 are each glycosylated (N-linked (GlcNAc...) asparagine).

Belongs to the BPI/LBP/Plunc superfamily. Plunc family. Detected in duodenum mucosal crypts of cholera patients, near Paneth cells (at protein level). Detected in trachea, nasal septal epithelium and lung.

It localises to the secreted. In terms of biological role, may play a role in innate immunity in mouth, nose and lungs. Binds bacterial lipopolysaccharide (LPS) and modulates the cellular responses to LPS. This chain is BPI fold-containing family B member 1 (BPIFB1), found in Homo sapiens (Human).